Reading from the N-terminus, the 303-residue chain is tRNA dimethylallyltransferase (303 aa).

16-23 (GPTASGKS) lines the ATP pocket. A substrate-binding site is contributed by 18 to 23 (TASGKS). The segment at 41-44 (DSMQ) is interaction with substrate tRNA. The interval 141 to 161 (AEALHGELSARDPETAGRVRP) is disordered. The segment at 165 to 169 (QRIVR) is interaction with substrate tRNA.

It belongs to the IPP transferase family. As to quaternary structure, monomer. Mg(2+) serves as cofactor.

It carries out the reaction adenosine(37) in tRNA + dimethylallyl diphosphate = N(6)-dimethylallyladenosine(37) in tRNA + diphosphate. Functionally, catalyzes the transfer of a dimethylallyl group onto the adenine at position 37 in tRNAs that read codons beginning with uridine, leading to the formation of N6-(dimethylallyl)adenosine (i(6)A). This Rhizobium meliloti (strain 1021) (Ensifer meliloti) protein is tRNA dimethylallyltransferase.